Reading from the N-terminus, the 518-residue chain is MKKLKINYLFIGILALLLAVALWPSIPWFGKADNRIAAIQARGELRVSTIHTPLTYNEINGKPFGLDYELAKQFADYLGVKLKVTVRQNISQLFDDLDNGNADLLAAGLVYNSERVKNYQPGPTYYSVSQQLVYKVGQYRPRTLGNLTAEQLTVAPGHVVVNDLQTLKETKFPELSWKVDDKKGSAELMEDVIEGKLDYTIADSVAISLFQRVHPELAVALDITDEQPVTWFSPLDGDNTLSAALLDFFNEMNEDGTLARIEEKYLGHGDDFDYVDTRTFLRAVDAVLPQLKPLFEKYAEEIDWRLLAAIAYQESHWDAQATSPTGVRGMMMLTKNTAQSLGITDRTDAEQSISGGVRYLQDMMSKVPESVPENERIWFALAAYNMGYAHMQDARALTAKTKGNPDSWADVKQRLPLLSQKPYYSKLTYGYARGHEAYAYVENIRKYQISLVGYLQEKEKQATEAAMQLAQDYPAVSPTELGKEKFPFLSFLSQSSSNYLTHSPSLLFSRKGSEEKQN.

The signal sequence occupies residues 1–21 (MKKLKINYLFIGILALLLAVA). Residues 22 to 269 (LWPSIPWFGK…RIEEKYLGHG (248 aa)) are non-LT domain. The interval 270–518 (DDFDYVDTRT…SRKGSEEKQN (249 aa)) is LT domain. E314 is an active-site residue.

In the N-terminal section; belongs to the bacterial solute-binding protein 3 family. The protein in the C-terminal section; belongs to the transglycosylase Slt family.

Its subcellular location is the cell outer membrane. It catalyses the reaction Exolytic cleavage of the (1-&gt;4)-beta-glycosidic linkage between N-acetylmuramic acid (MurNAc) and N-acetylglucosamine (GlcNAc) residues in peptidoglycan, from either the reducing or the non-reducing ends of the peptidoglycan chains, with concomitant formation of a 1,6-anhydrobond in the MurNAc residue.. Its function is as follows. Murein-degrading enzyme that degrades murein glycan strands and insoluble, high-molecular weight murein sacculi, with the concomitant formation of a 1,6-anhydromuramoyl product. Lytic transglycosylases (LTs) play an integral role in the metabolism of the peptidoglycan (PG) sacculus. Their lytic action creates space within the PG sacculus to allow for its expansion as well as for the insertion of various structures such as secretion systems and flagella. The protein is Membrane-bound lytic murein transglycosylase F of Escherichia coli O157:H7.